A 194-amino-acid polypeptide reads, in one-letter code: SRP-independent targeting protein 3 homolog (194 aa).

Helical transmembrane passes span 43 to 63 (ILYA…KIII) and 110 to 130 (LVTI…PPLL).

Belongs to the PHO88 family.

The protein resides in the endoplasmic reticulum membrane. Functionally, may function in a SRP (signal recognition particle) and GET (guided entry of tail-anchored proteins) independent pathway for targeting a broad range of substrate proteins to the endoplasmic reticulum. Involved in inorganic phosphate uptake. Also involved in telomere length regulation and maintenance. The chain is SRP-independent targeting protein 3 homolog from Schizosaccharomyces pombe (strain 972 / ATCC 24843) (Fission yeast).